The following is a 308-amino-acid chain: Aspartate carbamoyltransferase catalytic subunit (308 aa).

The carbamoyl phosphate site is built by Arg58 and Thr59. Lys86 lines the L-aspartate pocket. Positions 108, 136, and 139 each coordinate carbamoyl phosphate. L-aspartate contacts are provided by Arg169 and Arg227. Carbamoyl phosphate is bound by residues Gly268 and Pro269.

The protein belongs to the aspartate/ornithine carbamoyltransferase superfamily. ATCase family. As to quaternary structure, heterododecamer (2C3:3R2) of six catalytic PyrB chains organized as two trimers (C3), and six regulatory PyrI chains organized as three dimers (R2).

It catalyses the reaction carbamoyl phosphate + L-aspartate = N-carbamoyl-L-aspartate + phosphate + H(+). It functions in the pathway pyrimidine metabolism; UMP biosynthesis via de novo pathway; (S)-dihydroorotate from bicarbonate: step 2/3. Catalyzes the condensation of carbamoyl phosphate and aspartate to form carbamoyl aspartate and inorganic phosphate, the committed step in the de novo pyrimidine nucleotide biosynthesis pathway. This is Aspartate carbamoyltransferase catalytic subunit from Chloroflexus aurantiacus (strain ATCC 29366 / DSM 635 / J-10-fl).